The chain runs to 293 residues: Nucleotide-binding protein DvMF_0424 (293 aa).

Residue 13–20 (GLSGAGKS) coordinates ATP. Residue 65-68 (DLRE) participates in GTP binding.

Belongs to the RapZ-like family.

Its function is as follows. Displays ATPase and GTPase activities. This is Nucleotide-binding protein DvMF_0424 from Nitratidesulfovibrio vulgaris (strain DSM 19637 / Miyazaki F) (Desulfovibrio vulgaris).